Here is a 649-residue protein sequence, read N- to C-terminus: DNA mismatch repair protein MutL (649 aa).

Belongs to the DNA mismatch repair MutL/HexB family.

This protein is involved in the repair of mismatches in DNA. It is required for dam-dependent methyl-directed DNA mismatch repair. May act as a 'molecular matchmaker', a protein that promotes the formation of a stable complex between two or more DNA-binding proteins in an ATP-dependent manner without itself being part of a final effector complex. The chain is DNA mismatch repair protein MutL from Streptococcus pneumoniae (strain P1031).